The primary structure comprises 98 residues: Putative septation protein SpoVG (98 aa).

The protein belongs to the SpoVG family.

Functionally, could be involved in septation. The chain is Putative septation protein SpoVG from Alkaliphilus metalliredigens (strain QYMF).